Consider the following 259-residue polypeptide: Carbonic anhydrase 1 (259 aa).

Position 1 is an N-acetylalanine (Ala1). Positions His2–Phe258 constitute an Alpha-carbonic anhydrase domain. Residue His63 is the Proton donor/acceptor of the active site. Zn(2+) is bound by residues His93, His95, and His118. Substrate contacts are provided by residues Thr197 and Thr197–Thr198.

This sequence belongs to the alpha-carbonic anhydrase family. Zn(2+) serves as cofactor.

It localises to the cytoplasm. It catalyses the reaction hydrogencarbonate + H(+) = CO2 + H2O. Functionally, catalyzes the reversible hydration of carbon dioxide. This chain is Carbonic anhydrase 1 (ca1), found in Chionodraco hamatus (Antarctic teleost icefish).